The chain runs to 1235 residues: ATP-dependent helicase/nuclease subunit A (1235 aa).

The UvrD-like helicase ATP-binding domain occupies 12–482 (TLWTDDQWKA…IDLSQNFRSR (471 aa)). 33 to 40 (AAAGSGKT) serves as a coordination point for ATP. The UvrD-like helicase C-terminal domain occupies 509-800 (AAELTLGANF…RMMTIHASKG (292 aa)).

The protein belongs to the helicase family. AddA subfamily. As to quaternary structure, heterodimer of AddA and AddB/RexB. Mg(2+) serves as cofactor.

It catalyses the reaction Couples ATP hydrolysis with the unwinding of duplex DNA by translocating in the 3'-5' direction.. The catalysed reaction is ATP + H2O = ADP + phosphate + H(+). The heterodimer acts as both an ATP-dependent DNA helicase and an ATP-dependent, dual-direction single-stranded exonuclease. Recognizes the chi site generating a DNA molecule suitable for the initiation of homologous recombination. The AddA nuclease domain is required for chi fragment generation; this subunit has the helicase and 3' -&gt; 5' nuclease activities. The chain is ATP-dependent helicase/nuclease subunit A from Listeria welshimeri serovar 6b (strain ATCC 35897 / DSM 20650 / CCUG 15529 / CIP 8149 / NCTC 11857 / SLCC 5334 / V8).